Reading from the N-terminus, the 312-residue chain is Methionyl-tRNA formyltransferase (312 aa).

109–112 contributes to the (6S)-5,6,7,8-tetrahydrofolate binding site; the sequence is SLLP.

This sequence belongs to the Fmt family.

The enzyme catalyses L-methionyl-tRNA(fMet) + (6R)-10-formyltetrahydrofolate = N-formyl-L-methionyl-tRNA(fMet) + (6S)-5,6,7,8-tetrahydrofolate + H(+). Attaches a formyl group to the free amino group of methionyl-tRNA(fMet). The formyl group appears to play a dual role in the initiator identity of N-formylmethionyl-tRNA by promoting its recognition by IF2 and preventing the misappropriation of this tRNA by the elongation apparatus. In Listeria monocytogenes serovar 1/2a (strain ATCC BAA-679 / EGD-e), this protein is Methionyl-tRNA formyltransferase.